Consider the following 197-residue polypeptide: Signal peptidase complex catalytic subunit SEC11 (197 aa).

The Cytoplasmic segment spans residues 1-14 (MLSSLAPYMANPRQ). A helical; Signal-anchor for type II membrane protein transmembrane segment spans residues 15 to 33 (TLTQVLNFALVLSTAFMLW). At 34 to 197 (KGLSVVTNST…MGLMVVLQRE (164 aa)) the chain is on the lumenal side. N-linked (GlcNAc...) asparagine glycosylation is present at asparagine 41. Residues serine 53 and histidine 92 each act as charge relay system in the active site. A compositionally biased stretch (basic and acidic residues) spans 102 to 115 (PGREDKKSVKKGGE). Positions 102 to 134 (PGREDKKSVKKGGEEGEETSSTPSQKLLTKGDN) are disordered. The active-site Charge relay system is aspartate 139. The segment at 183-194 (VLLGFMGLMVVL) is C-terminal short (CTS) helix.

It belongs to the peptidase S26B family. In terms of assembly, component of the signal peptidase complex (SPC) composed of a catalytic subunit SEC11 and three accessory subunits SPC1, SPC2 and SPC3. The complex induces a local thinning of the ER membrane which is used to measure the length of the signal peptide (SP) h-region of protein substrates. This ensures the selectivity of the complex towards h-regions shorter than 18-20 amino acids. SPC associates with the translocon complex.

The protein resides in the endoplasmic reticulum membrane. It carries out the reaction Cleavage of hydrophobic, N-terminal signal or leader sequences from secreted and periplasmic proteins.. Its function is as follows. Catalytic component of the signal peptidase complex (SPC) which catalyzes the cleavage of N-terminal signal sequences from nascent proteins as they are translocated into the lumen of the endoplasmic reticulum. Specifically cleaves N-terminal signal peptides that contain a hydrophobic alpha-helix (h-region) shorter than 18-20 amino acids. The chain is Signal peptidase complex catalytic subunit SEC11 (SEC11) from Paracoccidioides lutzii (strain ATCC MYA-826 / Pb01) (Paracoccidioides brasiliensis).